The sequence spans 215 residues: Large ribosomal subunit protein uL4 (215 aa).

Residues 43 to 97 (RRQGTHSTKTRAEVSGGGKKPWRQKGTGRARAGSTRSPIWVGGGKTHTPKPRDYS) form a disordered region.

This sequence belongs to the universal ribosomal protein uL4 family. As to quaternary structure, part of the 50S ribosomal subunit.

One of the primary rRNA binding proteins, this protein initially binds near the 5'-end of the 23S rRNA. It is important during the early stages of 50S assembly. It makes multiple contacts with different domains of the 23S rRNA in the assembled 50S subunit and ribosome. Its function is as follows. Forms part of the polypeptide exit tunnel. The chain is Large ribosomal subunit protein uL4 from Brachyspira hyodysenteriae (strain ATCC 49526 / WA1).